Reading from the N-terminus, the 320-residue chain is MARKKIALIGSGMIGGTLAHIIGLKELGDVVLFDIAEGIPQGKALDIAESSPVDGFDVSLTGANSYDVIEGADVVIVTAGVARKPGMSRDDLLGINLKVMEQVGAGIKKYASSAFVICITNPLDAMVWALQKFSGLPTQKVVGMAGILDSARFRHFLSEEFKISVKDVTAFVLGGHGDSMVPLVRYSTVGGISLPDLVKMGWTTQEKIDQIIQRTRDGGAEIVSLLKTGSAFYAPAASAVSMAEAYLKDTKRVVPVAAYLSGQYGVKDTYVGVPVVIGAGGVERVIEIDLDKEEKAAFEKSVSAVQKLCEACIAVAPGLK.

NAD(+) is bound by residues 10–15 (GSGMIG) and Asp-34. Residues Arg-83 and Arg-89 each contribute to the substrate site. Residues Asn-96 and 119–121 (ITN) contribute to the NAD(+) site. 2 residues coordinate substrate: Asn-121 and Arg-152. The active-site Proton acceptor is His-176.

Belongs to the LDH/MDH superfamily. MDH type 3 family.

The enzyme catalyses (S)-malate + NAD(+) = oxaloacetate + NADH + H(+). Its function is as follows. Catalyzes the reversible oxidation of malate to oxaloacetate. The sequence is that of Malate dehydrogenase from Bartonella henselae (strain ATCC 49882 / DSM 28221 / CCUG 30454 / Houston 1) (Rochalimaea henselae).